A 78-amino-acid chain; its full sequence is uncharacterized protein (78 aa).

Helical transmembrane passes span 7-27 (ICLV…FFQF) and 41-61 (LSRI…GLLF).

It is found in the cell membrane. This is an uncharacterized protein from Bacillus subtilis (strain 168).